A 208-amino-acid polypeptide reads, in one-letter code: Holliday junction branch migration complex subunit RuvA (208 aa).

The domain I stretch occupies residues 1 to 63 (MIAFVSGPVA…EDSLTLYGFA (63 aa)). Residues 64 to 142 (NDDERQVFEL…EPVGAHIGQQ (79 aa)) are domain II. The segment at 143-147 (GIGTP) is flexible linker. Residues 148–208 (VTSGWRDQLQ…AALQTLNRAR (61 aa)) form a domain III region.

This sequence belongs to the RuvA family. Homotetramer. Forms an RuvA(8)-RuvB(12)-Holliday junction (HJ) complex. HJ DNA is sandwiched between 2 RuvA tetramers; dsDNA enters through RuvA and exits via RuvB. An RuvB hexamer assembles on each DNA strand where it exits the tetramer. Each RuvB hexamer is contacted by two RuvA subunits (via domain III) on 2 adjacent RuvB subunits; this complex drives branch migration. In the full resolvosome a probable DNA-RuvA(4)-RuvB(12)-RuvC(2) complex forms which resolves the HJ.

It is found in the cytoplasm. Functionally, the RuvA-RuvB-RuvC complex processes Holliday junction (HJ) DNA during genetic recombination and DNA repair, while the RuvA-RuvB complex plays an important role in the rescue of blocked DNA replication forks via replication fork reversal (RFR). RuvA specifically binds to HJ cruciform DNA, conferring on it an open structure. The RuvB hexamer acts as an ATP-dependent pump, pulling dsDNA into and through the RuvAB complex. HJ branch migration allows RuvC to scan DNA until it finds its consensus sequence, where it cleaves and resolves the cruciform DNA. The protein is Holliday junction branch migration complex subunit RuvA of Streptomyces griseus subsp. griseus (strain JCM 4626 / CBS 651.72 / NBRC 13350 / KCC S-0626 / ISP 5235).